The sequence spans 122 residues: Large ribosomal subunit protein uL14c (122 aa).

It belongs to the universal ribosomal protein uL14 family. Part of the 50S ribosomal subunit.

It is found in the plastid. In terms of biological role, binds to 23S rRNA. The sequence is that of Large ribosomal subunit protein uL14c from Cuscuta exaltata (Tall dodder).